Here is a 299-residue protein sequence, read N- to C-terminus: MKKLGTDLLKRGFAKMVKHGVVMDVTNVEQAQIAEDAGAAAVMALERVPADIRVQGGVARMSDPEMILEIKDAVSIPVMAKARIGHFVEAQVLESIGVDMVDESEVLTPADEVNHIDKRAFTAPFVCGARNLGEALRRIDEGAAMIRTKGEAGTGNVVEAVKHMRAVNEGIARVVGYKEMGLEAELIQMARNELKVPMELISEVAELKRLPVVNFAAGGIATPADAALMMQMGCDGVFVGSGIFKSGNPATRAKAIVEATYNFDKPDVIGEVSKNLGEAMVGINIDEIPEEKLLAKRGI.

Asp24 contacts D-ribose 5-phosphate. The active-site Schiff-base intermediate with D-ribose 5-phosphate is the Lys81. Gly153 serves as a coordination point for D-ribose 5-phosphate. A D-glyceraldehyde 3-phosphate-binding site is contributed by Arg165. D-ribose 5-phosphate-binding positions include Gly219 and 240 to 241; that span reads GS.

Belongs to the PdxS/SNZ family. In the presence of PdxT, forms a dodecamer of heterodimers.

The catalysed reaction is aldehydo-D-ribose 5-phosphate + D-glyceraldehyde 3-phosphate + L-glutamine = pyridoxal 5'-phosphate + L-glutamate + phosphate + 3 H2O + H(+). It participates in cofactor biosynthesis; pyridoxal 5'-phosphate biosynthesis. In terms of biological role, catalyzes the formation of pyridoxal 5'-phosphate from ribose 5-phosphate (RBP), glyceraldehyde 3-phosphate (G3P) and ammonia. The ammonia is provided by the PdxT subunit. Can also use ribulose 5-phosphate and dihydroxyacetone phosphate as substrates, resulting from enzyme-catalyzed isomerization of RBP and G3P, respectively. The polypeptide is Pyridoxal 5'-phosphate synthase subunit PdxS (Methanococcus maripaludis (strain C7 / ATCC BAA-1331)).